Consider the following 520-residue polypeptide: MKSFSLLASAGLATLASLPLTMAGVITPSYFDKHPLSRRQLSDAQVQRELGPQLSRGATIIGPGGPGWDDAIERFDNESRPTIRLVVVPAVESDIATVVKLANRFGIPFLVKNRGHALTNTIGRFRGIQIDMSRLTTITIQPGEPAESAWFQGGAWDKQAIEYLWDRGYVTVTGSCDCVGMMGPGLGGGHGRYQGLYGLISDNLINMNVVLADGSAVRVNATSNPDLWWGMQGAGHNLGIVTSFQSKIYPRKIDTWHYHSYTYTQDKLEAVFGALNTFHGNGDGSTPVLMGLNTGGFYIDPSVSQTEPVVSWVFGYAGPASEAEALLEPFSRLGPAAEQSGDVPYPGVATAMGTGQDQPLCQPGDAHVQVTSQFNVYNATAERALYQLFNRTIAAHPQLADSVAFHEGYSTAAVDRADPSASAVAFRDRKLLMFFDARLKPADAADPEVLGMAREFGRQVRRIWNEGAPDLKPATYVNYAAGDEPLESMYGYDAARLRRLRNIKRKYDPHGRFVYYNPIA.

A signal peptide spans 1–23; the sequence is MKSFSLLASAGLATLASLPLTMA. Residues Asn-77, Asn-220, Asn-378, and Asn-390 are each glycosylated (N-linked (GlcNAc...) asparagine). The FAD-binding PCMH-type domain occupies 79-251; sequence SRPTIRLVVV…TSFQSKIYPR (173 aa).

This sequence belongs to the oxygen-dependent FAD-linked oxidoreductase family. It depends on FAD as a cofactor.

The protein operates within polyketide biosynthesis. FAD-linked oxidoreductase; part of the gene cluster that mediates the biosynthesis of pyriculol and pyriculariol, two heptaketides that induce lesion formation upon application on rice leaves but are dispensable for pathogenicity. The highly reducing polyketide synthase synthesizes the heptaketide backbone of pyriculol and pyriculariol. Pyriculol and pyriculariol contain several hydroxyl moieties and double bonds, so it can be assumed that several reduction steps occur during biosynthesis. These reactions could be executed by PKS19 itself or partly by the tailoring enzymes OXR1, OXR2, RED1, RED2 or RED3, identified within the cluster. The FAD-linked oxidoreductase OXR1 is the only tailoring enzyme for which the function has been determined yet, and is involved in the oxidation of dihydropyriculol and dihydropyriculariol into pyriculol and pyriculariol, respectively. This is FAD-linked oxidoreductase OXR2 from Pyricularia oryzae (strain 70-15 / ATCC MYA-4617 / FGSC 8958) (Rice blast fungus).